Reading from the N-terminus, the 331-residue chain is Ribosomal RNA small subunit methyltransferase H (331 aa).

S-adenosyl-L-methionine-binding positions include 48-50 (GGH), Asp67, Asp115, and Gln122. The interval 297–331 (RGTEKPTEEEISENRRASSAKVRAVEKIRTSRTTA) is disordered. Residues 298–312 (GTEKPTEEEISENRR) are compositionally biased toward basic and acidic residues.

Belongs to the methyltransferase superfamily. RsmH family.

The protein resides in the cytoplasm. The enzyme catalyses cytidine(1402) in 16S rRNA + S-adenosyl-L-methionine = N(4)-methylcytidine(1402) in 16S rRNA + S-adenosyl-L-homocysteine + H(+). Specifically methylates the N4 position of cytidine in position 1402 (C1402) of 16S rRNA. This chain is Ribosomal RNA small subunit methyltransferase H, found in Micrococcus luteus (strain ATCC 4698 / DSM 20030 / JCM 1464 / CCM 169 / CCUG 5858 / IAM 1056 / NBRC 3333 / NCIMB 9278 / NCTC 2665 / VKM Ac-2230) (Micrococcus lysodeikticus).